We begin with the raw amino-acid sequence, 500 residues long: 4-aminobutyrate aminotransferase, mitochondrial (500 aa).

The N-terminal 27 residues, 1–27, are a transit peptide targeting the mitochondrion; that stretch reads MAFLLTTRRLVCSSQKNLHLFTPGSRY. Residue Cys163 coordinates [2Fe-2S] cluster. 164–165 is a binding site for pyridoxal 5'-phosphate; the sequence is GS. [2Fe-2S] cluster is bound at residue Cys166. Residue Arg220 participates in substrate binding. Lys231 is modified (N6-succinyllysine). At Lys252 the chain carries N6-acetyllysine; alternate. Lys252 bears the N6-succinyllysine; alternate mark. Residues Lys279 and Lys318 each carry the N6-acetyllysine modification. Lys357 carries the post-translational modification N6-(pyridoxal phosphate)lysine. Residue Thr381 participates in pyridoxal 5'-phosphate binding. An N6-acetyllysine; alternate modification is found at Lys413. Lys413 bears the N6-succinyllysine; alternate mark. 2 positions are modified to N6-acetyllysine: Lys452 and Lys470.

It belongs to the class-III pyridoxal-phosphate-dependent aminotransferase family. As to quaternary structure, homodimer; disulfide-linked. Requires pyridoxal 5'-phosphate as cofactor. [2Fe-2S] cluster is required as a cofactor.

The protein resides in the mitochondrion matrix. It catalyses the reaction 4-aminobutanoate + 2-oxoglutarate = succinate semialdehyde + L-glutamate. The catalysed reaction is (S)-3-amino-2-methylpropanoate + 2-oxoglutarate = 2-methyl-3-oxopropanoate + L-glutamate. Functionally, catalyzes the conversion of gamma-aminobutyrate and L-beta-aminoisobutyrate to succinate semialdehyde and methylmalonate semialdehyde, respectively. Can also convert delta-aminovalerate and beta-alanine. The sequence is that of 4-aminobutyrate aminotransferase, mitochondrial from Rattus norvegicus (Rat).